The sequence spans 488 residues: Serine/threonine-protein kinase 32C (488 aa).

The interval 1 to 56 (MRSGAERRGSSAAAPPSSPPPGRARPAGSDVSPALPPPAASQPRARDAGDARAQPR) is disordered. 3 positions are modified to phosphoserine: serine 10, serine 17, and serine 18. Residues 24 to 33 (ARPAGSDVSP) show a composition bias toward low complexity. A Protein kinase domain is found at 94 to 354 (FQILRAIGKG…LQDMQTAPSL (261 aa)). ATP is bound by residues 100-108 (IGKGSFGKV) and lysine 123. The active-site Proton acceptor is aspartate 217. Residues 397-406 (HKKKKRLAKN) show a composition bias toward basic residues. Disordered stretches follow at residues 397-420 (HKKK…QSEN) and 443-488 (KRSQ…SGSS).

The protein belongs to the protein kinase superfamily. Ser/Thr protein kinase family. It depends on Mg(2+) as a cofactor.

It catalyses the reaction L-seryl-[protein] + ATP = O-phospho-L-seryl-[protein] + ADP + H(+). The catalysed reaction is L-threonyl-[protein] + ATP = O-phospho-L-threonyl-[protein] + ADP + H(+). This Mus musculus (Mouse) protein is Serine/threonine-protein kinase 32C.